A 106-amino-acid chain; its full sequence is MNDSEFHRLADALWLTIEERLDNWDGDSDIDCEINGGVLTLSFENGSKIIINRQEPLHQVWLATKQGGYHFDLKDDEWVCDRSGETFWDLLEQAATQQAGEKVSFR.

Belongs to the frataxin family.

Functionally, involved in iron-sulfur (Fe-S) cluster assembly. May act as a regulator of Fe-S biogenesis. The polypeptide is Iron-sulfur cluster assembly protein CyaY (Salmonella newport (strain SL254)).